Consider the following 101-residue polypeptide: CYC02 protein (101 aa).

The 1; approximate repeat unit spans residues 42–64 (DAVCHHGCCRWFHHRCVRCCRSA). Residues 42–101 (DAVCHHGCCRWFHHRCVRCCRSAEEVSVSDTENNAAADAHCRHGCCRWFHGRCIRCCPSA) form a 2 X approximate repeats region. A 2; approximate repeat occupies 79 to 101 (DAHCRHGCCRWFHGRCIRCCPSA).

It belongs to the GRP family.

Functionally, may be involved in the control of the cell cycle at the G1/S start transition. This Catharanthus roseus (Madagascar periwinkle) protein is CYC02 protein (CYC02).